Consider the following 232-residue polypeptide: Cytidylate kinase (232 aa).

An ATP-binding site is contributed by 19-27 (GPAGVGKTT).

This sequence belongs to the cytidylate kinase family. Type 1 subfamily.

It localises to the cytoplasm. The enzyme catalyses CMP + ATP = CDP + ADP. The catalysed reaction is dCMP + ATP = dCDP + ADP. In Nitratidesulfovibrio vulgaris (strain ATCC 29579 / DSM 644 / CCUG 34227 / NCIMB 8303 / VKM B-1760 / Hildenborough) (Desulfovibrio vulgaris), this protein is Cytidylate kinase.